Consider the following 477-residue polypeptide: Adenylyl cyclase-associated protein 2 (477 aa).

Alanine 2 is subject to N-acetylalanine. Disordered regions lie at residues 224–261 and 274–323; these read VLSSGPGLPPPPPPPPPPGPPPLLENEGKKEESSPSRS and TKGL…KHAP. Over residues 230-246 the composition is skewed to pro residues; the sequence is GLPPPPPPPPPPGPPPL. A phosphoserine mark is found at serine 301 and serine 309. Over residues 301-320 the composition is skewed to low complexity; sequence SPTKSHTPSPTSPKSYPSQK. One can recognise a C-CAP/cofactor C-like domain in the interval 317 to 455; that stretch reads PSQKHAPVLE…QDGDYREFPI (139 aa).

Belongs to the CAP family.

The protein localises to the cell membrane. Involved in the regulation of actin polymerization. The chain is Adenylyl cyclase-associated protein 2 (CAP2) from Pongo abelii (Sumatran orangutan).